Consider the following 88-residue polypeptide: LYR motif-containing protein 2 (88 aa).

The transit peptide at 1–19 directs the protein to the mitochondrion; that stretch reads MAASRLPPATLTLKQFMRR.

Belongs to the complex I LYR family.

The protein localises to the mitochondrion. Functionally, involved in efficient integration of the N-module into mitochondrial respiratory chain complex I. The sequence is that of LYR motif-containing protein 2 (Lyrm2) from Rattus norvegicus (Rat).